A 548-amino-acid polypeptide reads, in one-letter code: Glucose-6-phosphate isomerase 1 (548 aa).

The Proton donor role is filled by Glu-353. Residues His-384 and Lys-512 contribute to the active site.

The protein belongs to the GPI family.

The protein resides in the cytoplasm. It carries out the reaction alpha-D-glucose 6-phosphate = beta-D-fructose 6-phosphate. It functions in the pathway carbohydrate biosynthesis; gluconeogenesis. The protein operates within carbohydrate degradation; glycolysis; D-glyceraldehyde 3-phosphate and glycerone phosphate from D-glucose: step 2/4. Its function is as follows. Catalyzes the reversible isomerization of glucose-6-phosphate to fructose-6-phosphate. This is Glucose-6-phosphate isomerase 1 from Neisseria meningitidis serogroup A / serotype 4A (strain DSM 15465 / Z2491).